The chain runs to 409 residues: Multifunctional CCA protein (409 aa).

2 residues coordinate ATP: glycine 8 and arginine 11. Positions 8 and 11 each coordinate CTP. Residues aspartate 21 and aspartate 23 each contribute to the Mg(2+) site. Arginine 91, arginine 137, and arginine 140 together coordinate ATP. 3 residues coordinate CTP: arginine 91, arginine 137, and arginine 140. The 102-residue stretch at threonine 228 to tyrosine 329 folds into the HD domain.

It belongs to the tRNA nucleotidyltransferase/poly(A) polymerase family. Bacterial CCA-adding enzyme type 1 subfamily. As to quaternary structure, monomer. Can also form homodimers and oligomers. It depends on Mg(2+) as a cofactor. Requires Ni(2+) as cofactor.

It carries out the reaction a tRNA precursor + 2 CTP + ATP = a tRNA with a 3' CCA end + 3 diphosphate. The catalysed reaction is a tRNA with a 3' CCA end + 2 CTP + ATP = a tRNA with a 3' CCACCA end + 3 diphosphate. In terms of biological role, catalyzes the addition and repair of the essential 3'-terminal CCA sequence in tRNAs without using a nucleic acid template. Adds these three nucleotides in the order of C, C, and A to the tRNA nucleotide-73, using CTP and ATP as substrates and producing inorganic pyrophosphate. tRNA 3'-terminal CCA addition is required both for tRNA processing and repair. Also involved in tRNA surveillance by mediating tandem CCA addition to generate a CCACCA at the 3' terminus of unstable tRNAs. While stable tRNAs receive only 3'-terminal CCA, unstable tRNAs are marked with CCACCA and rapidly degraded. In Pseudomonas fluorescens (strain SBW25), this protein is Multifunctional CCA protein.